The primary structure comprises 368 residues: Glutamate 5-kinase (368 aa).

Lys-11 contributes to the ATP binding site. Residues Ser-51, Asp-138, and Asn-150 each contribute to the substrate site. ATP contacts are provided by residues 170 to 171 and 212 to 218; these read TD and TGGMATK. The PUA domain maps to 276 to 354; that stretch reads AGEIIVDHGA…QQISQILGYE (79 aa).

The protein belongs to the glutamate 5-kinase family.

Its subcellular location is the cytoplasm. It carries out the reaction L-glutamate + ATP = L-glutamyl 5-phosphate + ADP. It functions in the pathway amino-acid biosynthesis; L-proline biosynthesis; L-glutamate 5-semialdehyde from L-glutamate: step 1/2. Functionally, catalyzes the transfer of a phosphate group to glutamate to form L-glutamate 5-phosphate. The polypeptide is Glutamate 5-kinase (Photorhabdus laumondii subsp. laumondii (strain DSM 15139 / CIP 105565 / TT01) (Photorhabdus luminescens subsp. laumondii)).